A 298-amino-acid polypeptide reads, in one-letter code: Probable 3-mercaptopyruvate sulfurtransferase (298 aa).

Residues 24–141 (NAQKTVLLDA…WKTEGLELET (118 aa)) enclose the Rhodanese 1 domain. The tract at residues 142-175 (GEPRTPKPVVYEGAKLNKDLVASFDDIVKVIESP) is hinge. Ser164 is subject to Phosphoserine. Residues 176-292 (DAAGVHIVDA…YGKRANEDSS (117 aa)) form the Rhodanese 2 domain. Substrate is bound at residue Arg190. Cys252 acts as the Cysteine persulfide intermediate in catalysis.

It localises to the mitochondrion. The enzyme catalyses 2-oxo-3-sulfanylpropanoate + [thioredoxin]-dithiol = [thioredoxin]-disulfide + hydrogen sulfide + pyruvate + H(+). Its function is as follows. Required for formation of the 2-thio group of the 5-methoxycarbonylmethyl-2-thiouridine modified base in some tRNAs. The polypeptide is Probable 3-mercaptopyruvate sulfurtransferase (tum1) (Schizosaccharomyces pombe (strain 972 / ATCC 24843) (Fission yeast)).